The sequence spans 455 residues: Chromosomal replication initiator protein DnaA (455 aa).

Residues 1–75 (MDTNNNIEKE…EILSQNKVGM (75 aa)) form a domain I, interacts with DnaA modulators region. The interval 75–106 (MHLAHSVDVRIEVAPKIQISAQPNINYKAVKT) is domain II. A domain III, AAA+ region region spans residues 107–321 (SVKDSYTFEN…GAIIKISVNA (215 aa)). 4 residues coordinate ATP: Gly-151, Gly-153, Lys-154, and Thr-155. The interval 322 to 455 (NLMNAPIDLN…DKKTAFHSSE (134 aa)) is domain IV, binds dsDNA.

Belongs to the DnaA family. As to quaternary structure, oligomerizes as a right-handed, spiral filament on DNA at oriC.

The protein resides in the cytoplasm. In terms of biological role, plays an essential role in the initiation and regulation of chromosomal replication. ATP-DnaA binds to the origin of replication (oriC) to initiate formation of the DNA replication initiation complex once per cell cycle. Binds the DnaA box (a 9 base pair repeat at the origin) and separates the double-stranded (ds)DNA. Forms a right-handed helical filament on oriC DNA; dsDNA binds to the exterior of the filament while single-stranded (ss)DNA is stabiized in the filament's interior. The ATP-DnaA-oriC complex binds and stabilizes one strand of the AT-rich DNA unwinding element (DUE), permitting loading of DNA polymerase. After initiation quickly degrades to an ADP-DnaA complex that is not apt for DNA replication. Binds acidic phospholipids. The protein is Chromosomal replication initiator protein DnaA of Helicobacter pylori (strain Shi470).